Reading from the N-terminus, the 66-residue chain is Beta-toxin Cb3 (66 aa).

Positions 1-66 (KEGYIVNYYD…VWPLPNKTCL (66 aa)) constitute an LCN-type CS-alpha/beta domain. Cystine bridges form between Cys12–Cys65, Cys16–Cys41, Cys25–Cys46, and Cys29–Cys48.

It belongs to the long (4 C-C) scorpion toxin superfamily. Sodium channel inhibitor family. Beta subfamily. As to expression, expressed by the venom gland.

It is found in the secreted. In terms of biological role, beta toxins bind voltage-independently at site-4 of sodium channels (Nav) and reduces peak current and shifts the voltage of activation toward more negative potentials thereby affecting sodium channel activation and promoting spontaneous and repetitive firing. Has an inhibitory effect on voltage-gated sodium channels hNav1.1/SCN1A, hNav1.2/SCN2A, hNav1.4/SCN4A and hNav1.6/SCN8A. Reduces the peak current of hNav1.5/SCN5A but does not shift its voltage of activation. Also affects the inactivation processes of hNav1.1/SCN1A, hNav1.4/SCN4A, hNav1.5/SCN5A and hNav1.6/SCN8A. This toxin is active against mammals and lethal to mice. This is Beta-toxin Cb3 from Centruroides baergi (Scorpion).